The primary structure comprises 98 residues: NADH-ubiquinone oxidoreductase chain 4L (98 aa).

The next 3 membrane-spanning stretches (helical) occupy residues 1–21, 29–49, and 61–81; these read MSLV…GLLM, SLLC…IMVL, and IILL…LVMV.

This sequence belongs to the complex I subunit 4L family. In terms of assembly, core subunit of respiratory chain NADH dehydrogenase (Complex I) which is composed of 45 different subunits.

The protein localises to the mitochondrion inner membrane. The catalysed reaction is a ubiquinone + NADH + 5 H(+)(in) = a ubiquinol + NAD(+) + 4 H(+)(out). Its function is as follows. Core subunit of the mitochondrial membrane respiratory chain NADH dehydrogenase (Complex I) which catalyzes electron transfer from NADH through the respiratory chain, using ubiquinone as an electron acceptor. Part of the enzyme membrane arm which is embedded in the lipid bilayer and involved in proton translocation. This is NADH-ubiquinone oxidoreductase chain 4L (MT-ND4L) from Pseudosoriculus fumidus (Taiwanese brown-toothed shrew).